The primary structure comprises 1288 residues: Vacuolating cytotoxin autotransporter (1288 aa).

The first 33 residues, 1–33 (MEIQQTHRKINRPLVSLVLAGALISAIPQESHA), serve as a signal peptide directing secretion. Residues 326–377 (PPEGGYKDKPNSTTSQSGTKNDKKEISQNNNSNTEVINPPNNTQKTETEPTQ) are disordered. Residues 352-376 (SQNNNSNTEVINPPNNTQKTETEPT) are compositionally biased toward polar residues. One can recognise an Autotransporter domain in the interval 1015 to 1288 (KYEKPTNVWA…ASNLGMRYSF (274 aa)).

Its subcellular location is the periplasm. It is found in the secreted. The protein resides in the cell surface. The protein localises to the cell outer membrane. Induces vacuolation of eukaryotic cells. Causes ulceration and gastric lesions. This chain is Vacuolating cytotoxin autotransporter (vacA), found in Helicobacter pylori (strain J99 / ATCC 700824) (Campylobacter pylori J99).